A 1066-amino-acid polypeptide reads, in one-letter code: E3 ubiquitin-protein ligase RNF31 (1066 aa).

The interval 1-479 (MPGDEERGFL…PEKQRQDKMR (479 aa)) is polyubiquitin-binding. The 72-residue stretch at 70 to 141 (TLSTALNILE…SFPEGQEEPD (72 aa)) folds into the PUB domain. Residues 251–287 (LRQALPGSHQTASLSSSLPASSQPRPPSSSLALGDSS) form a disordered region. A compositionally biased stretch (low complexity) spans 262–287 (ASLSSSLPASSQPRPPSSSLALGDSS). RanBP2-type zinc fingers lie at residues 293 to 325 (PANA…PKGC) and 344 to 373 (ARDQ…PRLA). Ser-377 carries the post-translational modification Phosphoserine. Residues 403–432 (QPQVWYCDHCTFCNSGPVWVCAMCNRTRDP) form a RanBP2-type 3 zinc finger. The disordered stretch occupies residues 434-478 (PTQPALQSYPSSLEKGRPKPGSSQHLGSSLPASCGDPEKQRQDKM). The span at 454–464 (GSSQHLGSSLP) shows a compositional bias: polar residues. A compositionally biased stretch (basic and acidic residues) spans 469 to 478 (DPEKQRQDKM). The interaction with RBCK1 stretch occupies residues 557-610 (GNLDEAVEECVRARRRKVHELQSLGFGPKEGSLQALFQHGGDVARALTELQRQR). Residues 558–609 (NLDEAVEECVRARRRKVHELQSLGFGPKEGSLQALFQHGGDVARALTELQRQ) form the UBA domain. The segment at 689–923 (LAQECAVCGW…KSLHGHHPRD (235 aa)) is TRIAD supradomain. Positions 693, 696, 711, 713, 716, 719, 738, 741, 793, 796, 811, 814, 819, 822, 830, 835, 865, and 868 each coordinate Zn(2+). The RING-type 1 zinc finger occupies 693-743 (CAVCGWALPRNRMQALISCECTICPECFRQHFTIALKEKHITDMVCPACGR). An IBR-type zinc finger spans residues 773-835 (ALFHKKLTEA…WEEQHRGRSC (63 aa)). The RING-type 2; atypical zinc-finger motif lies at 865-895 (CPKCKFSYALARGGCMHFHCTQCRHQFCSGC). Cys-879 is an active-site residue. Residues Cys-884, Cys-887, Cys-892, Cys-895, Cys-910, and His-919 each coordinate Zn(2+). The LDD domain stretch occupies residues 904 to 1066 (KCPDPNCKVK…LGQSIARRRK (163 aa)).

This sequence belongs to the RBR family. In terms of assembly, component of the LUBAC complex (linear ubiquitin chain assembly complex) which consists of SHARPIN, RBCK1 and RNF31. LUBAC has a MW of approximately 600 kDa suggesting a heteromultimeric assembly of its subunits. Associates with the TNF-R1 signaling complex (TNF-RSC) in a stimulation-dependent manner. Interacts (via the PUB domain) with OTULIN (via the PIM motif); the interaction is direct. Interacts (via the PUB domain) with VCP (via the PIM motif). Interacts (via the PUB domain) with SPATA2 (via the PIM motif); interaction is direct and bridges RNF31 and CYLD. Interacts with CYLD; the interaction is indirect and is mediated via SPATA2. Interacts with MUSK. Interacts with CARD11, promoting linear ubiquitination of BCL10. Autoubiquitinated. Interaction with OTULIN is required to suppress formation of 'Met-1'-linked polyubiquitin chains and prevent subsequent inactivation of the LUBAC complex. Post-translationally, cleaved by caspase during apoptosis. In terms of tissue distribution, widely expressed (at protein level). Not expressed in heart.

It is found in the cytoplasm. It carries out the reaction [E2 ubiquitin-conjugating enzyme]-S-ubiquitinyl-L-cysteine + [acceptor protein]-L-lysine = [E2 ubiquitin-conjugating enzyme]-L-cysteine + [acceptor protein]-N(6)-ubiquitinyl-L-lysine.. It functions in the pathway protein modification; protein ubiquitination. Functionally, E3 ubiquitin-protein ligase component of the LUBAC complex which conjugates linear ('Met-1'-linked) polyubiquitin chains to substrates and plays a key role in NF-kappa-B activation and regulation of inflammation. LUBAC conjugates linear polyubiquitin to IKBKG and RIPK1 and is involved in activation of the canonical NF-kappa-B and the JNK signaling pathways. Linear ubiquitination mediated by the LUBAC complex interferes with TNF-induced cell death and thereby prevents inflammation. LUBAC is recruited to the TNF-R1 signaling complex (TNF-RSC) following polyubiquitination of TNF-RSC components by BIRC2 and/or BIRC3 and to conjugate linear polyubiquitin to IKBKG and possibly other components contributing to the stability of the complex. The LUBAC complex is also involved in innate immunity by conjugating linear polyubiquitin chains at the surface of bacteria invading the cytosol to form the ubiquitin coat surrounding bacteria. LUBAC is not able to initiate formation of the bacterial ubiquitin coat, and can only promote formation of linear polyubiquitins on pre-existing ubiquitin. Recruited to the surface of bacteria by RNF213, which initiates the bacterial ubiquitin coat. The bacterial ubiquitin coat acts as an 'eat-me' signal for xenophagy and promotes NF-kappa-B activation. Together with OTULIN, the LUBAC complex regulates the canonical Wnt signaling during angiogenesis. RNF31 is required for linear ubiquitination of BCL10, thereby promoting TCR-induced NF-kappa-B activation. Binds polyubiquitin of different linkage types. This Mus musculus (Mouse) protein is E3 ubiquitin-protein ligase RNF31.